The chain runs to 466 residues: UDP-N-acetylmuramoylalanine--D-glutamate ligase (466 aa).

Residue 139-145 (GTAGKGG) coordinates ATP.

Belongs to the MurCDEF family.

The protein resides in the cytoplasm. It catalyses the reaction UDP-N-acetyl-alpha-D-muramoyl-L-alanine + D-glutamate + ATP = UDP-N-acetyl-alpha-D-muramoyl-L-alanyl-D-glutamate + ADP + phosphate + H(+). It participates in cell wall biogenesis; peptidoglycan biosynthesis. Its function is as follows. Cell wall formation. Catalyzes the addition of glutamate to the nucleotide precursor UDP-N-acetylmuramoyl-L-alanine (UMA). In Deinococcus geothermalis (strain DSM 11300 / CIP 105573 / AG-3a), this protein is UDP-N-acetylmuramoylalanine--D-glutamate ligase.